The sequence spans 245 residues: tRNA1(Val) (adenine(37)-N6)-methyltransferase (245 aa).

Belongs to the methyltransferase superfamily. tRNA (adenine-N(6)-)-methyltransferase family.

It localises to the cytoplasm. It carries out the reaction adenosine(37) in tRNA1(Val) + S-adenosyl-L-methionine = N(6)-methyladenosine(37) in tRNA1(Val) + S-adenosyl-L-homocysteine + H(+). Specifically methylates the adenine in position 37 of tRNA(1)(Val) (anticodon cmo5UAC). The polypeptide is tRNA1(Val) (adenine(37)-N6)-methyltransferase (Salmonella enteritidis PT4 (strain P125109)).